The following is a 249-amino-acid chain: Carboxy-S-adenosyl-L-methionine synthase (249 aa).

Residues Tyr39, 64–66, 117–118, Asn132, and Arg199 contribute to the S-adenosyl-L-methionine site; these read GCS and DI.

Belongs to the class I-like SAM-binding methyltransferase superfamily. Cx-SAM synthase family. As to quaternary structure, homodimer.

The catalysed reaction is prephenate + S-adenosyl-L-methionine = carboxy-S-adenosyl-L-methionine + 3-phenylpyruvate + H2O. Its function is as follows. Catalyzes the conversion of S-adenosyl-L-methionine (SAM) to carboxy-S-adenosyl-L-methionine (Cx-SAM). This is Carboxy-S-adenosyl-L-methionine synthase from Aeromonas hydrophila subsp. hydrophila (strain ATCC 7966 / DSM 30187 / BCRC 13018 / CCUG 14551 / JCM 1027 / KCTC 2358 / NCIMB 9240 / NCTC 8049).